The chain runs to 467 residues: Membrane-bound lytic murein transglycosylase F (467 aa).

The N-terminal stretch at 1–33 (MTELFRHSKHLLASLALLSVLGLMLAMHPSPSA) is a signal peptide. The segment at 34–266 (IERIMARGEL…KLEDRFYGHV (233 aa)) is non-LT domain. An LT domain region spans residues 268-467 (QFNLYAARSF…RRDDTLIALN (200 aa)). The active site involves Glu-313.

It in the N-terminal section; belongs to the bacterial solute-binding protein 3 family. This sequence in the C-terminal section; belongs to the transglycosylase Slt family.

It localises to the cell outer membrane. The enzyme catalyses Exolytic cleavage of the (1-&gt;4)-beta-glycosidic linkage between N-acetylmuramic acid (MurNAc) and N-acetylglucosamine (GlcNAc) residues in peptidoglycan, from either the reducing or the non-reducing ends of the peptidoglycan chains, with concomitant formation of a 1,6-anhydrobond in the MurNAc residue.. Functionally, murein-degrading enzyme that degrades murein glycan strands and insoluble, high-molecular weight murein sacculi, with the concomitant formation of a 1,6-anhydromuramoyl product. Lytic transglycosylases (LTs) play an integral role in the metabolism of the peptidoglycan (PG) sacculus. Their lytic action creates space within the PG sacculus to allow for its expansion as well as for the insertion of various structures such as secretion systems and flagella. This Alcanivorax borkumensis (strain ATCC 700651 / DSM 11573 / NCIMB 13689 / SK2) protein is Membrane-bound lytic murein transglycosylase F.